The following is a 327-amino-acid chain: Expansin-B7 (327 aa).

A signal peptide spans 1–30 (MAGRSRRRSFWSVGVAAALLCLLAAHGCSA). A disordered region spans residues 30–88 (AKHHKPKPTPGGISGNASSSSSNSSTPSIPPPVAPTPTAPTPPIPSPGTGSSNGSSGGG). Residues 44 to 56 (GNASSSSSNSSTP) are compositionally biased toward low complexity. Residues Asn-45 and Asn-52 are each glycosylated (N-linked (GlcNAc...) asparagine). Residues 57 to 75 (SIPPPVAPTPTAPTPPIPS) show a composition bias toward pro residues. N-linked (GlcNAc...) asparagine glycosylation is present at Asn-82. The region spanning 112–218 (GGACGFKNVN…RRVPCQYPGL (107 aa)) is the Expansin-like EG45 domain. 3 cysteine pairs are disulfide-bonded: Cys-115-Cys-143, Cys-146-Cys-213, and Cys-151-Cys-157. In terms of domain architecture, Expansin-like CBD spans 231 to 322 (VYMAILVEYE…DWQPNTVYSS (92 aa)). Residue Asn-298 is glycosylated (N-linked (GlcNAc...) asparagine).

The protein belongs to the expansin family. Expansin B subfamily.

Its subcellular location is the secreted. It is found in the cell wall. The protein localises to the membrane. In terms of biological role, may cause loosening and extension of plant cell walls by disrupting non-covalent bonding between cellulose microfibrils and matrix glucans. No enzymatic activity has been found. May be required for rapid internodal elongation in deepwater rice during submergence. The protein is Expansin-B7 (EXPB7) of Oryza sativa subsp. japonica (Rice).